The primary structure comprises 407 residues: Serine/threonine transporter SstT (407 aa).

9 helical membrane passes run 14–34, 48–68, 82–102, 141–161, 192–212, 216–236, 290–310, 316–336, and 363–383; these read GSLV…ATVS, FVGA…AASI, IVIL…LMSF, AVLT…GLAL, IGIF…AIAG, LLLV…PAIV, IPLG…ILTL, MGIQ…GVSA, and VAMQ…SAET.

It belongs to the dicarboxylate/amino acid:cation symporter (DAACS) (TC 2.A.23) family.

It localises to the cell inner membrane. The catalysed reaction is L-serine(in) + Na(+)(in) = L-serine(out) + Na(+)(out). The enzyme catalyses L-threonine(in) + Na(+)(in) = L-threonine(out) + Na(+)(out). Involved in the import of serine and threonine into the cell, with the concomitant import of sodium (symport system). The sequence is that of Serine/threonine transporter SstT from Shewanella halifaxensis (strain HAW-EB4).